Reading from the N-terminus, the 265-residue chain is Thiazole synthase (265 aa).

The active-site Schiff-base intermediate with DXP is the K103. 1-deoxy-D-xylulose 5-phosphate is bound by residues G164, 190–191 (AG), and 212–213 (NT).

Belongs to the ThiG family. As to quaternary structure, homotetramer. Forms heterodimers with either ThiH or ThiS.

The protein localises to the cytoplasm. The catalysed reaction is [ThiS sulfur-carrier protein]-C-terminal-Gly-aminoethanethioate + 2-iminoacetate + 1-deoxy-D-xylulose 5-phosphate = [ThiS sulfur-carrier protein]-C-terminal Gly-Gly + 2-[(2R,5Z)-2-carboxy-4-methylthiazol-5(2H)-ylidene]ethyl phosphate + 2 H2O + H(+). It participates in cofactor biosynthesis; thiamine diphosphate biosynthesis. Functionally, catalyzes the rearrangement of 1-deoxy-D-xylulose 5-phosphate (DXP) to produce the thiazole phosphate moiety of thiamine. Sulfur is provided by the thiocarboxylate moiety of the carrier protein ThiS. In vitro, sulfur can be provided by H(2)S. The sequence is that of Thiazole synthase from Bordetella bronchiseptica (strain ATCC BAA-588 / NCTC 13252 / RB50) (Alcaligenes bronchisepticus).